The chain runs to 235 residues: MRPDDINPRTGLVVALVSVFLVFGFMFTVSGMKGETLGNIPLLAIGPAICLPGIAAIALARKTEGCTKWPENELLWVRKLPCFRKPKDKEVVELLRTPSDLESGKGSSDELAKKAGLRGKQLPQGPGEVPMASSVTTPTPTEEGECQSLVQSGRQEETSRYLDGYCPSASSLAYSALDAKCSAWDRSDRPEPEDSIFFVPQDSIIVCSYKQNSPYDRYCCYINQSQGRWDHETIV.

2 helical membrane-spanning segments follow: residues 12-32 (LVVA…VSGM) and 40-60 (IPLL…IALA). Positions 99–146 (SDLESGKGSSDELAKKAGLRGKQLPQGPGEVPMASSVTTPTPTEEGEC) are disordered.

It localises to the membrane. In Mus musculus (Mouse), this protein is Transmembrane protein 215 (Tmem215).